Here is a 221-residue protein sequence, read N- to C-terminus: Ribosomal RNA small subunit methyltransferase Nep1 (221 aa).

S-adenosyl-L-methionine contacts are provided by residues Gly174, Gly179, and 196–201; that span reads IGDETM.

This sequence belongs to the class IV-like SAM-binding methyltransferase superfamily. RNA methyltransferase NEP1 family. As to quaternary structure, homodimer.

It carries out the reaction a pseudouridine in rRNA + S-adenosyl-L-methionine = an N(1)-methylpseudouridine in rRNA + S-adenosyl-L-homocysteine + H(+). In terms of biological role, methyltransferase involved in ribosomal biogenesis. Specifically catalyzes the N1-methylation of the pseudouridine corresponding to position 914 in M.jannaschii 16S rRNA. The chain is Ribosomal RNA small subunit methyltransferase Nep1 from Pyrobaculum islandicum (strain DSM 4184 / JCM 9189 / GEO3).